The sequence spans 164 residues: V-type proton ATPase 16 kDa proteolipid subunit (164 aa).

At 1-9 the chain is on the lumenal side; that stretch reads MSNFAGDET. A helical transmembrane segment spans residues 10 to 32; the sequence is APFFGFLGAAAALVFSCMGAAYG. The Cytoplasmic segment spans residues 33–54; sequence TAKSGVGVASMGVMRPELVMKS. A helical transmembrane segment spans residues 55–75; it reads IVPVVMAGVLGIYGLIIAVII. The Lumenal portion of the chain corresponds to 76 to 94; sequence STGINPKTKSYYLFDGYAH. Residues 95 to 116 form a helical membrane-spanning segment; it reads LSSGLACGLAGLSAGMAIGIVG. Residues 117 to 128 lie on the Cytoplasmic side of the membrane; the sequence is DAGVRANAQQPK. The chain crosses the membrane as a helical span at residues 129-154; that stretch reads LFVGMILILIFAEALALYGLIVGIIL. Topologically, residues 155–164 are lumenal; it reads SSRAGQSRAE.

The protein belongs to the V-ATPase proteolipid subunit family. V-ATPase is a heteromultimeric enzyme composed of a peripheral catalytic V1 complex (main components: subunits A, B, C, D, E, and F) attached to an integral membrane V0 proton pore complex (main component: the proteolipid protein; which is present as a hexamer that forms the proton-conducting pore).

The protein localises to the vacuole membrane. Functionally, proton-conducting pore forming subunit of the membrane integral V0 complex of vacuolar ATPase. V-ATPase is responsible for acidifying a variety of intracellular compartments in eukaryotic cells. The protein is V-type proton ATPase 16 kDa proteolipid subunit of Solanum lycopersicum (Tomato).